Reading from the N-terminus, the 467-residue chain is ATP synthase subunit beta (467 aa).

An ATP-binding site is contributed by 154-161 (GGAGVGKT).

Belongs to the ATPase alpha/beta chains family. F-type ATPases have 2 components, CF(1) - the catalytic core - and CF(0) - the membrane proton channel. CF(1) has five subunits: alpha(3), beta(3), gamma(1), delta(1), epsilon(1). CF(0) has three main subunits: a(1), b(2) and c(9-12). The alpha and beta chains form an alternating ring which encloses part of the gamma chain. CF(1) is attached to CF(0) by a central stalk formed by the gamma and epsilon chains, while a peripheral stalk is formed by the delta and b chains.

It is found in the cell inner membrane. It catalyses the reaction ATP + H2O + 4 H(+)(in) = ADP + phosphate + 5 H(+)(out). Its function is as follows. Produces ATP from ADP in the presence of a proton gradient across the membrane. The catalytic sites are hosted primarily by the beta subunits. The sequence is that of ATP synthase subunit beta from Petrotoga mobilis (strain DSM 10674 / SJ95).